The following is an 810-amino-acid chain: Lon protease (810 aa).

In terms of domain architecture, Lon N-terminal spans 8–201 (LPLLPLRGIL…KLCGIVAKEL (194 aa)). 353 to 360 (GPPGVGKT) contributes to the ATP binding site. Residues 589–770 (NDEVGTVTGM…DQVLAIALLE (182 aa)) enclose the Lon proteolytic domain. Active-site residues include S676 and K719.

The protein belongs to the peptidase S16 family. In terms of assembly, homohexamer. Organized in a ring with a central cavity.

The protein localises to the cytoplasm. The catalysed reaction is Hydrolysis of proteins in presence of ATP.. Functionally, ATP-dependent serine protease that mediates the selective degradation of mutant and abnormal proteins as well as certain short-lived regulatory proteins. Required for cellular homeostasis and for survival from DNA damage and developmental changes induced by stress. Degrades polypeptides processively to yield small peptide fragments that are 5 to 10 amino acids long. Binds to DNA in a double-stranded, site-specific manner. The sequence is that of Lon protease from Desulforamulus reducens (strain ATCC BAA-1160 / DSM 100696 / MI-1) (Desulfotomaculum reducens).